The sequence spans 679 residues: Methionine--tRNA ligase (679 aa).

Positions 14–24 (PYANGSIHLGH) match the 'HIGH' region motif. Cysteine 145, cysteine 148, cysteine 158, and cysteine 161 together coordinate Zn(2+). A 'KMSKS' region motif is present at residues 331 to 335 (KMSKS). Lysine 334 is a binding site for ATP. The region spanning 577 to 679 (TFAAVDLRVA…SGAKPGQRIK (103 aa)) is the tRNA-binding domain.

The protein belongs to the class-I aminoacyl-tRNA synthetase family. MetG type 1 subfamily. As to quaternary structure, homodimer. Zn(2+) is required as a cofactor.

The protein localises to the cytoplasm. The catalysed reaction is tRNA(Met) + L-methionine + ATP = L-methionyl-tRNA(Met) + AMP + diphosphate. In terms of biological role, is required not only for elongation of protein synthesis but also for the initiation of all mRNA translation through initiator tRNA(fMet) aminoacylation. This is Methionine--tRNA ligase from Pseudomonas putida (strain GB-1).